A 349-amino-acid chain; its full sequence is 2-oxoglutarate-Fe(II) type oxidoreductase ppzD (349 aa).

The 112-residue stretch at 200–311 (NTSELRLNHY…RYSVAYFGKP (112 aa)) folds into the Fe2OG dioxygenase domain. Fe cation-binding residues include His-227, Asp-229, and His-287. Arg-302 lines the 2-oxoglutarate pocket.

It belongs to the iron/ascorbate-dependent oxidoreductase family. The cofactor is Fe(2+).

It carries out the reaction L-proline + 2-oxoglutarate + O2 = trans-4-hydroxy-L-proline + succinate + CO2. It catalyses the reaction L-proline + 2-oxoglutarate + O2 = trans-3-hydroxy-L-proline + succinate + CO2. The catalysed reaction is D-proline + 2-oxoglutarate + O2 = cis-4-hydroxy-D-proline + succinate + CO2. It participates in secondary metabolite biosynthesis. Its function is as follows. 2-oxoglutarate-Fe(II) type oxidoreductase; part of the gene cluster that mediates the biosynthesis of pyrrolopyrazines, secondary metabolites showing insecticidal activity. Within the pathway, ppzD converts L-proline into trans-4-hydroxy-L-proline as a major product, yielding a key precursor for peramine biosynthesis. PpzD is also able to convert L-proline into trans-3-hydroxy-L-proline. The single multifunctional NRPS ppzA is sufficient to produce peramine via condensation of 1-pyrroline-5-carboxylate and arginine, N-methylation of the alpha-amino group of arginine and reduction of the thioester and the cyclization to form an iminium ion resulting in release from the peptide synthetase. Deprotonation of this intermediate and oxidation of the pyrroline ring would give rise to peramine. In Epichloe species that produce only peramine, the peramine synthetase gene is not localized in a gene cluster, in contrast to Metarhizium species that contain additional pyrrolopyrazine biosynthesis genes. The 2-oxoglutarate-Fe(II) type oxidoreductase ppzC hydroxylates peramine to yield the newly identified compound 8-hydroxyperamine whereas ppzD converts L-proline into trans-4-hydroxy-L-proline, a precursor of peramine biosynthesis. This chain is 2-oxoglutarate-Fe(II) type oxidoreductase ppzD (ppzD), found in Metarhizium majus (strain ARSEF 297).